The chain runs to 88 residues: Eclosion hormone (88 aa).

Positions 1–26 (MANKLTAVIVVALAVAFMVNLDYANC) are cleaved as a signal peptide. 3 disulfides stabilise this stretch: Cys-40–Cys-64, Cys-44–Cys-60, and Cys-47–Cys-75.

This sequence belongs to the insect eclosion hormone family.

The protein localises to the secreted. Its function is as follows. Neuropeptide that triggers the performance of ecdysis behaviors at the end of a molt. It triggers adult behavior patterns: larval, pupal and adult ecdysis, and plasticization during the molt. This chain is Eclosion hormone, found in Bombyx mori (Silk moth).